The sequence spans 461 residues: Ornithine decarboxylase (461 aa).

Lysine 69 carries the N6-(pyridoxal phosphate)lysine modification. Pyridoxal 5'-phosphate is bound by residues serine 200, glycine 237, and 274-277 (EPGR). Serine 303 carries the phosphoserine; by CK2 modification. Residue 331–332 (YD) participates in substrate binding. The active-site Proton donor; shared with dimeric partner is cysteine 360. The residue at position 360 (cysteine 360) is an S-nitrosocysteine. Position 361 (aspartate 361) interacts with substrate. Pyridoxal 5'-phosphate is bound at residue tyrosine 389.

The protein belongs to the Orn/Lys/Arg decarboxylase class-II family. In terms of assembly, homodimer. Only the dimer is catalytically active, as the active sites are constructed of residues from both monomers. Does not form a heterodimer with AZIN2. Requires pyridoxal 5'-phosphate as cofactor. Expressed during testis development in the outer part of the seminiferous tubules.

The enzyme catalyses L-ornithine + H(+) = putrescine + CO2. It functions in the pathway amine and polyamine biosynthesis; putrescine biosynthesis via L-ornithine pathway; putrescine from L-ornithine: step 1/1. Inhibited by antizymes (AZs) OAZ1, OAZ2 and OAZ3 in response to polyamine levels. AZs inhibit the assembly of the functional homodimer by binding to ODC monomers. Additionally, OAZ1 targets ODC monomers for ubiquitin-independent proteolytic destruction by the 26S proteasome. Functionally, catalyzes the first and rate-limiting step of polyamine biosynthesis that converts ornithine into putrescine, which is the precursor for the polyamines, spermidine and spermine. Polyamines are essential for cell proliferation and are implicated in cellular processes, ranging from DNA replication to apoptosis. The sequence is that of Ornithine decarboxylase (Odc1) from Mus musculus (Mouse).